Here is a 185-residue protein sequence, read N- to C-terminus: Transcription termination/antitermination protein NusG (185 aa).

The KOW domain maps to 134–162 (PGQMVRVIDGPFNDFDGLVEEVNYEKNRL).

This sequence belongs to the NusG family.

Functionally, participates in transcription elongation, termination and antitermination. This is Transcription termination/antitermination protein NusG from Xylella fastidiosa (strain 9a5c).